The following is an 867-amino-acid chain: E3 ubiquitin-protein ligase SH3RF1 (867 aa).

Residues 12-53 form an RING-type zinc finger; the sequence is CPVCLERLDATAKVLPCQHTFCRRCLLGIVGSRGELRCPECR. A disordered region spans residues 101 to 127; that stretch reads AQGAGGSQRDPGPTGGQSQRVQAKSTP. A compositionally biased stretch (polar residues) spans 116–125; the sequence is GQSQRVQAKS. 2 consecutive SH3 domains span residues 132–191 and 194–257; these read PQLP…VIKP and QPPP…FNSA. Positions 265 to 328 are disordered; it reads DKPSEGGGDS…PPPQRHSMEI (64 aa). Low complexity predominate over residues 275–285; it reads SEGPSSSSSGP. Residues 436–497 form the SH3 3 domain; it reads QRPTVYVAMF…PGNYMSPVSR (62 aa). The segment at 706-794 is disordered; the sequence is LSNKKKLRPS…APIAPPPRQP (89 aa). Residues 760-769 show a composition bias toward low complexity; sequence SELSMSSSSS. Residues 770–784 show a composition bias toward polar residues; sequence NTDAVTHRSSPQDNT. The SH3 4 domain occupies 808–867; it reads IVCERYRVVVSYPPQSEAELELKEGDIVFVHKKREDGWFKGTLQRNGRTGLFPGSFVDSI.

It belongs to the SH3RF family. In terms of processing, autoubiquitinated. Ubiquitinated by SH3RF2, leading to proteasome-mediated degradation.

Its subcellular location is the cytoplasm. The protein localises to the perinuclear region. It is found in the cell projection. It localises to the lamellipodium. The protein resides in the golgi apparatus. Its subcellular location is the trans-Golgi network. The catalysed reaction is S-ubiquitinyl-[E2 ubiquitin-conjugating enzyme]-L-cysteine + [acceptor protein]-L-lysine = [E2 ubiquitin-conjugating enzyme]-L-cysteine + N(6)-ubiquitinyl-[acceptor protein]-L-lysine.. It participates in protein modification; protein ubiquitination. Functionally, has E3 ubiquitin-protein ligase activity. In the absence of an external substrate, it can catalyze self-ubiquitination. Acts as a scaffold protein that contributes to the effective activation of the JNK signaling pathway. This Danio rerio (Zebrafish) protein is E3 ubiquitin-protein ligase SH3RF1 (sh3rf1).